The chain runs to 698 residues: MTNRNFRQIINLLDLRWQRRVPVIHQTETAECGLACLAMICGHFGKNIDLIYLRRKFNLSARGATLAGINGIAEQLGMATRALSLELDELRVLKTPCILHWDFSHFVVLVSVKRNRYVLHDPARGIRYISREEMSRYFTGVALEVWPGSEFQSETLQTRISLRSLINSIYGIKRTLAKIFCLSVVIEAINLLMPVGTQLVMDHAIPAGDRGLLTLISAALMFFILLKAATSTLRAWSSLVMSTLINVQWQSGLFDHLLRLPLAFFERRKLGDIQSRFDSLDTLRATFTTSVIGFIMDSIMVVGVCVMMLLYGGYLTWIVLCFTTIYIFIRLVTYGNYRQISEECLVREARAASYFMETLYGIATVKIQGMVGIRGAHWLNMKIDAINSGIKLTRMDLLFGGINTFVTACDQIVILWLGAGLVIDNQMTIGMFVAFSSFRGQFSERVASLTSFLLQLRIMSLHNERIADIALHEKEEKKPEIEIVADMGPISLETNGLSYRYDSQSAPIFSALSLSVAPGESVAITGASGAGKTTLMKVLCGLFEPDSGRVLINGIDIRQIGINNYHRMIACVMQDDRLFSGSIRENICGFAEEMDEEWMVECARASHIHDVIMNMPMGYETLIGELGEGLSGGQKQRIFIARALYRKPGILFMDEATSALDSESEHFVNVAIKNMNITRVIIAHRETTLRTVDRVISI.

The Peptidase C39 domain maps to 26–145; the sequence is QTETAECGLA…RYFTGVALEV (120 aa). Cys32 is an active-site residue. 7 consecutive transmembrane segments (helical) span residues 33 to 53, 92 to 112, 176 to 196, 211 to 231, 289 to 311, 315 to 334, and 412 to 432; these read GLAC…LIYL, VLKT…LVSV, LAKI…MPVG, GLLT…AATS, TSVI…MLLY, LTWI…LVTY, and IVIL…IGMF. The region spanning 176–458 is the ABC transmembrane type-1 domain; sequence LAKIFCLSVV…LTSFLLQLRI (283 aa). Positions 492-698 constitute an ABC transporter domain; sequence LETNGLSYRY…LRTVDRVISI (207 aa). Position 526 to 533 (526 to 533) interacts with ATP; it reads GASGAGKT.

Belongs to the ABC transporter superfamily. Colicin V exporter (TC 3.A.1.110.2) family.

The protein resides in the cell membrane. Its function is as follows. Involved, in conjunction with CvaA, in the secretion of colicin V. This chain is Colicin V secretion/processing ATP-binding protein CvaB (cvaB), found in Escherichia coli.